Reading from the N-terminus, the 297-residue chain is tRNA dimethylallyltransferase (297 aa).

Residue 15 to 22 (GPTASGKS) coordinates ATP. Position 17-22 (17-22 (TASGKS)) interacts with substrate. Interaction with substrate tRNA regions lie at residues 40–43 (DSMQ) and 164–168 (QRIVR).

This sequence belongs to the IPP transferase family. Monomer. It depends on Mg(2+) as a cofactor.

The catalysed reaction is adenosine(37) in tRNA + dimethylallyl diphosphate = N(6)-dimethylallyladenosine(37) in tRNA + diphosphate. Functionally, catalyzes the transfer of a dimethylallyl group onto the adenine at position 37 in tRNAs that read codons beginning with uridine, leading to the formation of N6-(dimethylallyl)adenosine (i(6)A). The sequence is that of tRNA dimethylallyltransferase from Rhizobium etli (strain ATCC 51251 / DSM 11541 / JCM 21823 / NBRC 15573 / CFN 42).